The chain runs to 98 residues: NADH-ubiquinone oxidoreductase chain 4L (98 aa).

3 consecutive transmembrane segments (helical) span residues 1–21 (MSMV…GLLI), 30–50 (LLCL…TILT), and 61–81 (IILL…LVMI).

This sequence belongs to the complex I subunit 4L family. Core subunit of respiratory chain NADH dehydrogenase (Complex I) which is composed of 45 different subunits.

The protein localises to the mitochondrion inner membrane. It catalyses the reaction a ubiquinone + NADH + 5 H(+)(in) = a ubiquinol + NAD(+) + 4 H(+)(out). In terms of biological role, core subunit of the mitochondrial membrane respiratory chain NADH dehydrogenase (Complex I) which catalyzes electron transfer from NADH through the respiratory chain, using ubiquinone as an electron acceptor. Part of the enzyme membrane arm which is embedded in the lipid bilayer and involved in proton translocation. In Gulo gulo (Wolverine), this protein is NADH-ubiquinone oxidoreductase chain 4L (MT-ND4L).